Reading from the N-terminus, the 472-residue chain is Adenosylhomocysteinase (472 aa).

Positions 61, 139, and 198 each coordinate substrate. Residue 199–201 (TTT) participates in NAD(+) binding. 2 residues coordinate substrate: lysine 228 and aspartate 232. Residues asparagine 233, 262-267 (GFGDVG), glutamate 285, asparagine 320, 341-343 (IGH), and asparagine 386 contribute to the NAD(+) site.

It belongs to the adenosylhomocysteinase family. Requires NAD(+) as cofactor.

Its subcellular location is the cytoplasm. It carries out the reaction S-adenosyl-L-homocysteine + H2O = L-homocysteine + adenosine. It functions in the pathway amino-acid biosynthesis; L-homocysteine biosynthesis; L-homocysteine from S-adenosyl-L-homocysteine: step 1/1. Its function is as follows. May play a key role in the regulation of the intracellular concentration of adenosylhomocysteine. The protein is Adenosylhomocysteinase of Sphingopyxis alaskensis (strain DSM 13593 / LMG 18877 / RB2256) (Sphingomonas alaskensis).